A 133-amino-acid chain; its full sequence is Phosphoribosyl-AMP cyclohydrolase (133 aa).

Residue D77 participates in Mg(2+) binding. C78 contacts Zn(2+). D79 and D81 together coordinate Mg(2+). Zn(2+) is bound by residues C95 and C102.

This sequence belongs to the PRA-CH family. As to quaternary structure, homodimer. It depends on Mg(2+) as a cofactor. Requires Zn(2+) as cofactor.

Its subcellular location is the cytoplasm. The catalysed reaction is 1-(5-phospho-beta-D-ribosyl)-5'-AMP + H2O = 1-(5-phospho-beta-D-ribosyl)-5-[(5-phospho-beta-D-ribosylamino)methylideneamino]imidazole-4-carboxamide. It functions in the pathway amino-acid biosynthesis; L-histidine biosynthesis; L-histidine from 5-phospho-alpha-D-ribose 1-diphosphate: step 3/9. Functionally, catalyzes the hydrolysis of the adenine ring of phosphoribosyl-AMP. This is Phosphoribosyl-AMP cyclohydrolase from Azotobacter vinelandii (strain DJ / ATCC BAA-1303).